The following is a 428-amino-acid chain: Adenylosuccinate synthetase (428 aa).

Residues 11-17 (GDEGKGK) and 39-41 (GHT) contribute to the GTP site. Aspartate 12 functions as the Proton acceptor in the catalytic mechanism. Residues aspartate 12 and glycine 39 each coordinate Mg(2+). IMP is bound by residues 12 to 15 (DEGK), 37 to 40 (NAGH), threonine 130, arginine 144, asparagine 226, threonine 241, and arginine 305. Histidine 40 acts as the Proton donor in catalysis. 301–307 (VTTGRKR) contacts substrate. GTP is bound by residues arginine 307, 333–335 (KLD), and 415–417 (GTG).

The protein belongs to the adenylosuccinate synthetase family. As to quaternary structure, homodimer. It depends on Mg(2+) as a cofactor.

The protein resides in the cytoplasm. The catalysed reaction is IMP + L-aspartate + GTP = N(6)-(1,2-dicarboxyethyl)-AMP + GDP + phosphate + 2 H(+). It functions in the pathway purine metabolism; AMP biosynthesis via de novo pathway; AMP from IMP: step 1/2. In terms of biological role, plays an important role in the de novo pathway and in the salvage pathway of purine nucleotide biosynthesis. Catalyzes the first committed step in the biosynthesis of AMP from IMP. This Candida dubliniensis (strain CD36 / ATCC MYA-646 / CBS 7987 / NCPF 3949 / NRRL Y-17841) (Yeast) protein is Adenylosuccinate synthetase.